Consider the following 303-residue polypeptide: 2-dehydropantoate 2-reductase (303 aa).

NADP(+) is bound by residues 7 to 12 (GCGALG), N98, and A122. N98 serves as a coordination point for substrate. K176 (proton donor) is an active-site residue. N180, N184, N194, and S244 together coordinate substrate. Residue E256 participates in NADP(+) binding.

This sequence belongs to the ketopantoate reductase family. As to quaternary structure, monomer.

Its subcellular location is the cytoplasm. The enzyme catalyses (R)-pantoate + NADP(+) = 2-dehydropantoate + NADPH + H(+). The protein operates within cofactor biosynthesis; (R)-pantothenate biosynthesis; (R)-pantoate from 3-methyl-2-oxobutanoate: step 2/2. Catalyzes the NADPH-dependent reduction of ketopantoate into pantoic acid. This is 2-dehydropantoate 2-reductase (panE) from Salmonella typhi.